The chain runs to 181 residues: Beta-lactoglobulin-2 (181 aa).

Positions 1 to 18 (MKCLLLALGLSLMCGNQA) are cleaved as a signal peptide. Disulfide bonds link Cys84–Cys179 and Cys124–Cys138.

It belongs to the calycin superfamily. Lipocalin family. Monomer.

It localises to the secreted. In terms of biological role, lactoglobulin is the primary component of whey, it binds retinol and is probably involved in the transport of that molecule. This chain is Beta-lactoglobulin-2 (LGB2), found in Equus caballus (Horse).